The sequence spans 138 residues: Small ribosomal subunit protein uS11c (138 aa).

Positions 1–23 (MAKPILRIGSRKNTRSGSRKNVR) are disordered. Residues 9–23 (GSRKNTRSGSRKNVR) are compositionally biased toward basic residues.

Belongs to the universal ribosomal protein uS11 family. As to quaternary structure, part of the 30S ribosomal subunit.

The protein resides in the plastid. It localises to the chloroplast. The protein is Small ribosomal subunit protein uS11c of Crucihimalaya wallichii (Rock-cress).